The chain runs to 265 residues: Exosome complex component Rrp4 (265 aa).

The 73-residue stretch at 65 to 137 (GDNVIGKIVD…EVNNIDLTTK (73 aa)) folds into the S1 motif domain. The 59-residue stretch at 147–205 (KGGQIVKITPSRVPRVIGRGGSMINMIKKLTMTRIIVGQNGWIWVNGKNEALEKLAIEA) folds into the KH domain. Positions 241–254 (EIPELEEEPQEETE) are enriched in acidic residues. The segment at 241–265 (EIPELEEEPQEETEVNNNDGETRRT) is disordered.

Belongs to the RRP4 family. As to quaternary structure, component of the archaeal exosome complex. Forms a trimer of Rrp4 and/or Csl4 subunits. The trimer associates with a hexameric ring-like arrangement composed of 3 Rrp41-Rrp42 heterodimers.

The protein localises to the cytoplasm. In terms of biological role, non-catalytic component of the exosome, which is a complex involved in RNA degradation. Increases the RNA binding and the efficiency of RNA degradation. Confers strong poly(A) specificity to the exosome. The sequence is that of Exosome complex component Rrp4 from Pyrococcus horikoshii (strain ATCC 700860 / DSM 12428 / JCM 9974 / NBRC 100139 / OT-3).